Consider the following 480-residue polypeptide: Histone-lysine N-methyltransferase ASHR1 (480 aa).

Residues 11-248 (RCLGVSNLPQ…KDSEITISYI (238 aa)) enclose the SET domain. Residues cysteine 56, cysteine 59, cysteine 68, cysteine 71, cysteine 77, cysteine 81, histidine 89, and cysteine 93 each coordinate Zn(2+). The segment at 56–93 (CDGCFKTNNLKKCSACQVVWYCGSSCQKSEWKLHRDEC) adopts an MYND-type zinc-finger fold.

It belongs to the class V-like SAM-binding methyltransferase superfamily. Histone-lysine methyltransferase family. SET2 subfamily.

Its subcellular location is the nucleus. The protein resides in the chromosome. The catalysed reaction is L-lysyl-[histone] + S-adenosyl-L-methionine = N(6)-methyl-L-lysyl-[histone] + S-adenosyl-L-homocysteine + H(+). Histone methyltransferase. This Arabidopsis thaliana (Mouse-ear cress) protein is Histone-lysine N-methyltransferase ASHR1 (ASHR1).